Here is a 184-residue protein sequence, read N- to C-terminus: UPF0149 protein PSPA7_5968 (184 aa).

Belongs to the UPF0149 family.

This chain is UPF0149 protein PSPA7_5968, found in Pseudomonas paraeruginosa (strain DSM 24068 / PA7) (Pseudomonas aeruginosa (strain PA7)).